The primary structure comprises 123 residues: Small ribosomal subunit protein uS12 (123 aa).

A 3-methylthioaspartic acid modification is found at Asp90.

Belongs to the universal ribosomal protein uS12 family. Part of the 30S ribosomal subunit. Contacts proteins S8 and S17. May interact with IF1 in the 30S initiation complex.

Its function is as follows. With S4 and S5 plays an important role in translational accuracy. In terms of biological role, interacts with and stabilizes bases of the 16S rRNA that are involved in tRNA selection in the A site and with the mRNA backbone. Located at the interface of the 30S and 50S subunits, it traverses the body of the 30S subunit contacting proteins on the other side and probably holding the rRNA structure together. The combined cluster of proteins S8, S12 and S17 appears to hold together the shoulder and platform of the 30S subunit. This is Small ribosomal subunit protein uS12 from Ehrlichia ruminantium (strain Gardel).